Reading from the N-terminus, the 353-residue chain is Endophilin-A1 (353 aa).

Residues 1–21 form a membrane-binding amphipathic helix region; it reads MSVAGLKKQFHKATQKVSEKV. The interval 1–27 is disordered; sequence MSVAGLKKQFHKATQKVSEKVGGAEGT. The interval 1–125 is binds and tubulates liposomes; it reads MSVAGLKKQF…DVGEAMKELS (125 aa). Positions 18-249 constitute a BAR domain; the sequence is SEKVGGAEGT…LEDRIKEASS (232 aa). The segment at 60–87 is required for dimerization upon membrane association; that stretch reads PNPASRAKLSMINTMSKIRGQEKGPGYP. A coiled-coil region spans residues 181–201; that stretch reads EELRQALEKFDESKEIAESSM. Positions 243–257 are enriched in basic and acidic residues; it reads RIKEASSQPKREYQP. The segment at 243–290 is disordered; sequence RIKEASSQPKREYQPKPRMSLDFTSGGDNTQHNGGISHATTPKPAGAH. Polar residues predominate over residues 264 to 282; it reads DFTSGGDNTQHNGGISHAT. The 60-residue stretch at 291 to 350 folds into the SH3 domain; the sequence is MDQPCCRALYDFEPENEGELGFKEGDIITLTNQIDENWYEGMLHGQSGFFPINYVDILVP.

Belongs to the endophilin family. In terms of assembly, monomer; in cytoplasm. Homodimer; when associated with membranes. Associates with MAP4K3. This interaction appears to regulate MAP4K3-mediated JNK activation. Interacts with SYNJ1 and DNM1. In terms of tissue distribution, highly expressed in brain.

The protein resides in the cytoplasm. Its subcellular location is the membrane. The protein localises to the early endosome. It is found in the presynapse. In terms of biological role, implicated in synaptic vesicle endocytosis. May recruit other proteins to membranes with high curvature. The polypeptide is Endophilin-A1 (Gallus gallus (Chicken)).